A 145-amino-acid polypeptide reads, in one-letter code: RNAP inhibitory protein (145 aa).

Residues 110 to 123 (HIKKLNLNSLAMLS) form a C-terminal tail, binds in the RNAP DNA-binding channel region.

This sequence belongs to the viral ORF131/RIP family. In terms of assembly, interacts with host RNA polymerase (RNAP) subunits Rpo1N and Rpo2.

The protein localises to the virion. In terms of biological role, plays a role in the inhibition of global transcription by interacting with the RNA polymerase (RNAP) clamp, locking it in a fixed position and inhibiting the formation and/or stability of the pre-initiation complex (PIC). Also overlaps with the transcription factor B binding site; overall RIP probably interferes with DNA loading onto RNAP but does not displace DNA once it is loaded. May play a role in virus particle assembly, possibly by dissociating active RNAP from the virus genome. This chain is RNAP inhibitory protein, found in Acidianus two-tailed virus (ATV).